Consider the following 492-residue polypeptide: Catalase-3 (492 aa).

Residues histidine 65 and asparagine 138 contribute to the active site. Tyrosine 348 is a heme binding site.

Belongs to the catalase family. In terms of assembly, homotetramer and heterotetramer. At least six or seven isozymes are produced from a mixture of 3 gene products. Interacts with NCA1. Interacts with LSD1. Heme is required as a cofactor.

The protein localises to the peroxisome. It catalyses the reaction 2 H2O2 = O2 + 2 H2O. In terms of biological role, occurs in almost all aerobically respiring organisms and serves to protect cells from the toxic effects of hydrogen peroxide. The protein is Catalase-3 (CAT3) of Arabidopsis thaliana (Mouse-ear cress).